The chain runs to 113 residues: uncharacterized protein (113 aa).

Residues 94–113 form a disordered region; sequence SKTGLDEQAHVQKAHDVQDV. Positions 96 to 113 are enriched in basic and acidic residues; sequence TGLDEQAHVQKAHDVQDV.

Belongs to the geminiviridae protein AV2/V2 family. As to quaternary structure, interacts with host SGS3.

The protein localises to the host cytoplasm. The protein resides in the host perinuclear region. Its function is as follows. Through its interaction with host SGS3, acts as a suppressor of RNA-mediated gene silencing, also known as post-transcriptional gene silencing (PTGS), a mechanism of plant viral defense that limits the accumulation of viral RNAs. This is an uncharacterized protein from African cassava mosaic virus (isolate Nigerian) (ACMV).